A 427-amino-acid chain; its full sequence is Tol-Pal system protein TolB (427 aa).

A signal peptide spans 1–23; the sequence is MKLLKRLVSVFAIVLAVGSNAFA.

This sequence belongs to the TolB family. In terms of assembly, the Tol-Pal system is composed of five core proteins: the inner membrane proteins TolA, TolQ and TolR, the periplasmic protein TolB and the outer membrane protein Pal. They form a network linking the inner and outer membranes and the peptidoglycan layer.

It is found in the periplasm. Its function is as follows. Part of the Tol-Pal system, which plays a role in outer membrane invagination during cell division and is important for maintaining outer membrane integrity. This Haemophilus influenzae (strain ATCC 51907 / DSM 11121 / KW20 / Rd) protein is Tol-Pal system protein TolB.